We begin with the raw amino-acid sequence, 487 residues long: MTVQTAQIVKNYIGGEWVESISTKMEAVYNPATGEVIAQVPLSTKGDVEQAVLAANEAFKSWSKTAVPKRARILFKYQQLLVDNWEELAKLITIENGKSYNEAYGEVLRGIECVEFAAGAPTLMMGKQLPDIATGIESGMYRYPIGVIGGITPFNFPMMVPCWMFPLAIACGNTFVLKPSERTPLLAARLAELAEEAGLPKGVLNIVNGAHDVVNGLLEHKLVKAISFVGSQPVAEYVYKKGTENLKRVQALAGAKNHSIVLNDANLELATKQIISAAFGSAGERCMAASVVTVEEEIADQLVERLVEEANKIVIGNGLDEDVFLGPVIRDNHKERTIGYIDSGVEQGATLVRDGREDTAVKGAGYFVGPTIFDHVTKEMKIWQDEIFAPVLSIVRVKSLDEAIEIANESRFANGACIYTDSGASVRQFRETIESGMLGVNVGVPAPMAFFPFSGWKDSFYGDLHANGTDGVEFYTRKKMLTSRWEK.

Residues Phe154, Lys178, Glu181, Arg182, and Ser231 each contribute to the NAD(+) site. Cys286 serves as the catalytic Nucleophile. Glu386 is a binding site for NAD(+).

Belongs to the aldehyde dehydrogenase family. IolA subfamily. Homotetramer.

It catalyses the reaction 3-oxopropanoate + NAD(+) + CoA + H2O = hydrogencarbonate + acetyl-CoA + NADH + H(+). The catalysed reaction is 2-methyl-3-oxopropanoate + NAD(+) + CoA + H2O = propanoyl-CoA + hydrogencarbonate + NADH + H(+). It participates in polyol metabolism; myo-inositol degradation into acetyl-CoA; acetyl-CoA from myo-inositol: step 7/7. Functionally, catalyzes the oxidation of malonate semialdehyde (MSA) and methylmalonate semialdehyde (MMSA) into acetyl-CoA and propanoyl-CoA, respectively. Is involved in a myo-inositol catabolic pathway. Bicarbonate, and not CO2, is the end-product of the enzymatic reaction. This chain is Malonate-semialdehyde dehydrogenase 2, found in Bacillus thuringiensis (strain Al Hakam).